The chain runs to 278 residues: Formamidopyrimidine-DNA glycosylase (278 aa).

Residue P2 is the Schiff-base intermediate with DNA of the active site. The Proton donor role is filled by E3. K58 functions as the Proton donor; for beta-elimination activity in the catalytic mechanism. DNA is bound by residues H92 and R111. The FPG-type zinc finger occupies 239–273; sequence HVYGKKGVPCERCGTPIEKIKVAQRGTHFCPKCQI. R263 serves as the catalytic Proton donor; for delta-elimination activity.

The protein belongs to the FPG family. Monomer. Requires Zn(2+) as cofactor.

It catalyses the reaction Hydrolysis of DNA containing ring-opened 7-methylguanine residues, releasing 2,6-diamino-4-hydroxy-5-(N-methyl)formamidopyrimidine.. It carries out the reaction 2'-deoxyribonucleotide-(2'-deoxyribose 5'-phosphate)-2'-deoxyribonucleotide-DNA = a 3'-end 2'-deoxyribonucleotide-(2,3-dehydro-2,3-deoxyribose 5'-phosphate)-DNA + a 5'-end 5'-phospho-2'-deoxyribonucleoside-DNA + H(+). Its function is as follows. Involved in base excision repair of DNA damaged by oxidation or by mutagenic agents. Acts as a DNA glycosylase that recognizes and removes damaged bases. Has a preference for oxidized purines, such as 7,8-dihydro-8-oxoguanine (8-oxoG). Has AP (apurinic/apyrimidinic) lyase activity and introduces nicks in the DNA strand. Cleaves the DNA backbone by beta-delta elimination to generate a single-strand break at the site of the removed base with both 3'- and 5'-phosphates. The protein is Formamidopyrimidine-DNA glycosylase of Latilactobacillus sakei subsp. sakei (strain 23K) (Lactobacillus sakei subsp. sakei).